The sequence spans 570 residues: Nucleoprotein (570 aa).

The binding site for the cap structure m7GTP stretch occupies residues Met54–Ile241. The Mn(2+) site is built by Asp390 and Glu392. 4 residues coordinate Zn(2+): Glu400, Cys507, His510, and Cys530. Residue Asp534 participates in Mn(2+) binding.

This sequence belongs to the arenaviridae nucleocapsid protein family. As to quaternary structure, homomultimerizes to form the nucleocapsid. Binds to viral genomic RNA. Interacts with glycoprotein G2. Interacts with protein Z; this interaction probably directs the encapsidated genome to budding sites. Interacts with protein L; this interaction does not interfere with Z-L interaction. Interacts with host IKBKE (via Protein kinase domain); the interaction inhibits IKBKE kinase activity.

The protein resides in the virion. The protein localises to the host cytoplasm. Functionally, encapsidates the genome, protecting it from nucleases. The encapsidated genomic RNA is termed the nucleocapsid (NC). Serves as template for viral transcription and replication. The increased presence of protein N in host cell does not seem to trigger the switch from transcription to replication as observed in other negative strain RNA viruses. Through the interaction with host IKBKE, strongly inhibits the phosphorylation and nuclear translocation of host IRF3, a protein involved in interferon activation pathway, leading to the inhibition of interferon-beta and IRF3-dependent promoters activation. Also encodes a functional 3'-5' exoribonuclease that degrades preferentially dsRNA substrates and thereby participates in the suppression of interferon induction. This Homo sapiens (Human) protein is Nucleoprotein.